The following is a 181-amino-acid chain: Calmodulin-like protein 6 (181 aa).

EF-hand domains lie at 33–68 (EQIK…LGIN), 69–104 (PTKS…YHEK), 107–142 (NQES…AGEP), and 143–178 (LNEV…ESFK). Ca(2+) is bound by residues aspartate 156, aspartate 158, aspartate 160, threonine 162, and glutamate 167.

It belongs to the calmodulin family. Calglandulin subfamily. Expressed in prostate, thymus, heart, skeleton muscle, bone marrow and ovary.

The protein resides in the cytoplasm. It is found in the nucleus. This is Calmodulin-like protein 6 (CALML6) from Homo sapiens (Human).